We begin with the raw amino-acid sequence, 103 residues long: Large ribosomal subunit protein bL21 (103 aa).

The protein belongs to the bacterial ribosomal protein bL21 family. In terms of assembly, part of the 50S ribosomal subunit. Contacts protein L20.

Its function is as follows. This protein binds to 23S rRNA in the presence of protein L20. This chain is Large ribosomal subunit protein bL21, found in Vesicomyosocius okutanii subsp. Calyptogena okutanii (strain HA).